The chain runs to 479 residues: MTITHTYSSTAETSPGRVAIQTESEQITYHDWDRLVSQTANWLRSQPSMPNRVAILLPNSLAFLQLFAGAAAAGCTAIPIDTRWSPAECKERLSISNADLVVTLAFFKNKLTDSQTPVVLLDNCMADISEAAADPLPTIDPEHPFYMGFTSGSTGKPKAFTRSHRSWMESFTCTETDFSISSDDKVLIPGALMSSHFLYGAVSTLFLGGTVCLLKKFSPAKAKEWLCRESISVLYTVPTMTDALARIEGFPDSPVKIISSGADWPAESKKKLAAAWPHLKLYDFYGTSELSFVTFSSPEDSKRKPHSAGRPFHNVRIEIRNAGGERCQPGEIGKIFVKSPMRFSGYVNGSTPDEWMTVDDMGYVDEEGFLYISGRENGMIVYGGLNIFPEEIERVLLACPEVESAAVVGIPDEYWGEIAVAVILGNANARTLKAWCKQKLASYKIPKKWVFADSLPETSSGKIARSRVKKWLEESVQYK.

Residues 150-158 (TSGSTGKPK), Asp360, Arg375, and Lys462 each bind ATP.

Belongs to the ATP-dependent AMP-binding enzyme family.

In terms of biological role, may be involved in fatty acid metabolism. This is an uncharacterized protein from Bacillus subtilis (strain 168).